A 137-amino-acid polypeptide reads, in one-letter code: MPTINQLVRKPRQSKIKKSDSPALNKGFNSKKKKFTDLNSPQKRGVCTRVGTMTPKKPNSALRKYARVRLSNNIEINAYIPGIGHNLQEHSVVLVRGGRVKDLPGVRYHIVRGALDTSGVDGRRQGRSLYGTKKPKN.

Residues 1–55 form a disordered region; that stretch reads MPTINQLVRKPRQSKIKKSDSPALNKGFNSKKKKFTDLNSPQKRGVCTRVGTMTP. The residue at position 102 (aspartate 102) is a 3-methylthioaspartic acid. Residues 118-137 are disordered; it reads SGVDGRRQGRSLYGTKKPKN.

It belongs to the universal ribosomal protein uS12 family. Part of the 30S ribosomal subunit. Contacts proteins S8 and S17. May interact with IF1 in the 30S initiation complex.

With S4 and S5 plays an important role in translational accuracy. Its function is as follows. Interacts with and stabilizes bases of the 16S rRNA that are involved in tRNA selection in the A site and with the mRNA backbone. Located at the interface of the 30S and 50S subunits, it traverses the body of the 30S subunit contacting proteins on the other side and probably holding the rRNA structure together. The combined cluster of proteins S8, S12 and S17 appears to hold together the shoulder and platform of the 30S subunit. This is Small ribosomal subunit protein uS12 from Staphylococcus aureus (strain Mu3 / ATCC 700698).